A 1165-amino-acid polypeptide reads, in one-letter code: MASSSNTMEFEEDDSTVTQTSLPTTTSVLDKSRSLFGNSAVISTPARDSTPDGHIVDSSVITKSSVIIEAEDEPDVAADVTALDKEKAEDEPQCSAGKDAKSGESMNDSEKSESPIEEGEGETFEKKIISMDTSDDKLDIAESISVSNDTEKPEENEEKVVGDEDEEDIDDVQEDDEDEAPKKKTKKAVSTSDDDDLHEDDSPKGGSVSDEKEEPENEDDTEEPENEVEVESPVKEQADSGEPIENVNDDKASEPGVGEISQDSVDDSQKIGLDSKSPDGESEANEENQESQSSSRSTRRAKRVSATVSSTPSSNTPRRGGRGQKSEVNADETKTPIVSNSTPRRGRSSRGGDRDEVIDPTENVVGDSGVEETSPRKGRSRRSVATEDTSVTEEVENTEHPTEEETPKQGRGRRSAASSSATSSAVPTPRSTRGRGRKSQANEENLQEKETEDPTKTHDTNQAKSTRTPRGRRSNADAETMESVEAEKVETPTSSRRSTRAKPPAKSAPVTPAVTNKRTTVRGRKKQGSITEDPIEEADETIEETLPQKKGRGAAKSAPSSSKKSAEYDPYDLDTEMEHHPEPLKNIHMEVHNFGAVKYAKLGNSESKYSMTEKAAESRIAELQSSPAAKNRRSLADMTPGKDKMKHRVSSVGTSGRRSRAKKEEEHHENDIEMEDAPATATPASSNRGRKRKSEASDIKTPPAKKEPVIPLKNLSDEDQLLVDHPQDDNEPHAPGARVYAVFQKMFYPAVVLSERDGLGRYKVQFTVDNVIKDVPNSGIIPLRALSPGKTAVYNESDVRLDSGPNDISAAEWKKGKLTISIMDEDGEPTDEVKVVDWYDVSFDHSEWRDYVKSKDQSATAIVTSNITTISEATRARKPTTVSNQAKPKGRKKKGVDLVSSRGGSASPAEEEEKLLPMNEEAIGKNIFTGKVFMLTSANRSNSASVPSMFKKKNLMNFITQNGGIVTEQLNSFQERYSNYEPLLISDTYYRTHKYLAALARGVPCVNNTWLQACGEQGKCVDYTDYVLPAGASIFDESQDMPAPKNPSELLKGTTIYVHSTHSAREVTQTGPGGTFIEIWKPILELLGADVVDGDWETLDETGLKFDVVLVDGTFRDEVMEYADTIGASRVTSEWVIQTIILGKAPEPNAHPKFDPYRLHHRTRH.

Disordered stretches follow at residues 1–26 (MASS…PTTT), 70–578 (AEDE…TEME), 608–713 (KYSM…IPLK), and 874–913 (TRAR…EEEE). Low complexity predominate over residues 16-26 (TVTQTSLPTTT). 3 stretches are compositionally biased toward basic and acidic residues: residues 98 to 114 (KDAK…KSES), 123 to 140 (TFEK…KLDI), and 149 to 162 (DTEK…KVVG). 3 stretches are compositionally biased toward acidic residues: residues 163–179 (DEDE…DEDE), 211–230 (EKEE…EVEV), and 280–289 (GESEANEENQ). A compositionally biased stretch (polar residues) spans 306–317 (ATVSSTPSSNTP). Basic and acidic residues predominate over residues 397–408 (NTEHPTEEETPK). Residues 415-431 (SAASSSATSSAVPTPRS) show a composition bias toward low complexity. Over residues 446 to 461 (LQEKETEDPTKTHDTN) the composition is skewed to basic and acidic residues. Acidic residues predominate over residues 533-543 (DPIEEADETIE). Over residues 554-563 (AAKSAPSSSK) the composition is skewed to low complexity. 2 stretches are compositionally biased toward basic and acidic residues: residues 662–671 (KKEEEHHEND) and 694–708 (SEAS…KKEP). One can recognise a BRCT domain in the interval 923-1028 (IGKNIFTGKV…KCVDYTDYVL (106 aa)).

Expressed in germ cells.

It localises to the nucleus. May have a role in DNA double-strand break repair following gamma-irradiation. In Caenorhabditis elegans, this protein is Protein hsr-9.